We begin with the raw amino-acid sequence, 747 residues long: Histone-lysine N-methyltransferase EZH1 (747 aa).

The segment at Tyr186 to Lys229 is disordered. The segment covering His194–Val211 has biased composition (basic and acidic residues). A Glycyl lysine isopeptide (Lys-Gly) (interchain with G-Cter in SUMO2) cross-link involves residue Lys327. A disordered region spans residues Thr375–Gln421. Basic and acidic residues predominate over residues Glu382–Gly393. Positions Asp395–Lys414 are enriched in polar residues. The region spanning Cys504–Ser606 is the CXC domain. Positions Lys613–Arg728 constitute an SET domain.

This sequence belongs to the class V-like SAM-binding methyltransferase superfamily. Histone-lysine methyltransferase family. EZ subfamily. In terms of assembly, component of the PRC2/EED-EZH1 complex, which includes EED, EZH1, SUZ12, RBBP4 and AEBP2. The PRC2/EED-EZH1 is less abundant than the PRC2/EED-EZH2 complex, has weak methyltransferase activity and compacts chromatin in the absence of the methyltransferase cofactor S-adenosyl-L-methionine (SAM). Interacts with EZHIP; the interaction blocks EZH1 methyltransferase activity.

It localises to the nucleus. The catalysed reaction is L-lysyl(27)-[histone H3] + 3 S-adenosyl-L-methionine = N(6),N(6),N(6)-trimethyl-L-lysyl(27)-[histone H3] + 3 S-adenosyl-L-homocysteine + 3 H(+). Functionally, polycomb group (PcG) protein. Catalytic subunit of the PRC2/EED-EZH1 complex, which methylates 'Lys-27' of histone H3, leading to transcriptional repression of the affected target gene. Able to mono-, di- and trimethylate 'Lys-27' of histone H3 to form H3K27me1, H3K27me2 and H3K27me3, respectively. Required for embryonic stem cell derivation and self-renewal, suggesting that it is involved in safeguarding embryonic stem cell identity. Compared to EZH2-containing complexes, it is less abundant in embryonic stem cells, has weak methyltransferase activity and plays a less critical role in forming H3K27me3, which is required for embryonic stem cell identity and proper differentiation. This is Histone-lysine N-methyltransferase EZH1 (EZH1) from Bos taurus (Bovine).